Here is a 278-residue protein sequence, read N- to C-terminus: Small ribosomal subunit biogenesis GTPase RsgA (278 aa).

A CP-type G domain is found at 62–218 (KNTLVRPKVV…ICDTPGFNVI (157 aa)). Residues 112–115 (TKND) and 162–170 (GQSGVGKSS) each bind GTP. C241, C246, H248, and C254 together coordinate Zn(2+).

The protein belongs to the TRAFAC class YlqF/YawG GTPase family. RsgA subfamily. In terms of assembly, monomer. Associates with 30S ribosomal subunit, binds 16S rRNA. The cofactor is Zn(2+).

The protein localises to the cytoplasm. In terms of biological role, one of several proteins that assist in the late maturation steps of the functional core of the 30S ribosomal subunit. Helps release RbfA from mature subunits. May play a role in the assembly of ribosomal proteins into the subunit. Circularly permuted GTPase that catalyzes slow GTP hydrolysis, GTPase activity is stimulated by the 30S ribosomal subunit. The protein is Small ribosomal subunit biogenesis GTPase RsgA of Mycoplasma pneumoniae (strain ATCC 29342 / M129 / Subtype 1) (Mycoplasmoides pneumoniae).